A 218-amino-acid chain; its full sequence is Small ribosomal subunit protein uS3c (218 aa).

The 72-residue stretch at 47–118 folds into the KH type-2 domain; that stretch reads VQKNMRIFSG…KLNIAITRIG (72 aa).

It belongs to the universal ribosomal protein uS3 family. As to quaternary structure, part of the 30S ribosomal subunit.

It localises to the plastid. The protein localises to the chloroplast. The sequence is that of Small ribosomal subunit protein uS3c (rps3) from Cucumis sativus (Cucumber).